A 327-amino-acid chain; its full sequence is Carboxylesterase 20 (327 aa).

Positions 87–89 (HGG) match the Involved in the stabilization of the negatively charged intermediate by the formation of the oxyanion hole motif. Ser166 acts as the Nucleophile in catalysis. Residues Asp272 and His302 contribute to the active site.

The protein belongs to the 'GDXG' lipolytic enzyme family. Expressed in roots, stems, flowers and siliques.

The enzyme catalyses a carboxylic ester + H2O = an alcohol + a carboxylate + H(+). Esterase activity measured in vitro with the synthetic substrate p-nitrophenyl acetate (pNPA) is inhibited by strigolactone. Carboxylesterase that possesses esterase activity in vitro with the synthetic substrate p-nitrophenyl acetate (pNPA). Binds strigolactones, but is not able to hydrolyze them. May be involved in the regulation of shoot branching. In Arabidopsis thaliana (Mouse-ear cress), this protein is Carboxylesterase 20.